We begin with the raw amino-acid sequence, 141 residues long: Hemoglobin subunit alpha (141 aa).

A Globin domain is found at 1–141 (VLSAADKGHV…VSTVLTSKYR (141 aa)). Ser-3 carries the phosphoserine modification. 2 positions are modified to N6-succinyllysine: Lys-7 and Lys-11. Residue Lys-16 is modified to N6-acetyllysine; alternate. Lys-16 is subject to N6-succinyllysine; alternate. Phosphotyrosine is present on Tyr-24. Ser-35 bears the Phosphoserine mark. At Lys-40 the chain carries N6-succinyllysine. Position 49 is a phosphoserine (Ser-49). His-58 serves as a coordination point for O2. His-87 serves as a coordination point for heme b. Ser-102 carries the phosphoserine modification. Phosphothreonine is present on Thr-108. Ser-124 is subject to Phosphoserine. Residues Thr-134 and Thr-137 each carry the phosphothreonine modification. Ser-138 bears the Phosphoserine mark.

The protein belongs to the globin family. As to quaternary structure, heterotetramer of two alpha chains and two beta chains. As to expression, red blood cells.

Functionally, involved in oxygen transport from the lung to the various peripheral tissues. Hemopressin acts as an antagonist peptide of the cannabinoid receptor CNR1. Hemopressin-binding efficiently blocks cannabinoid receptor CNR1 and subsequent signaling. In Macropus giganteus (Eastern gray kangaroo), this protein is Hemoglobin subunit alpha (HBA).